Consider the following 1069-residue polypeptide: Epstein-Barr nuclear antigen 6 (1069 aa).

5 disordered regions span residues 1-75, 353-708, 733-776, 884-932, and 1008-1069; these read MESF…RIRR, MLAT…PCQS, SSMS…LYPG, REPR…PPRL, and PLDI…SELD. Over residues 50–67 the composition is skewed to basic and acidic residues; sequence PDSRDQQSRGQRRGDENR. 2 stretches are compositionally biased toward acidic residues: residues 381 to 391 and 507 to 524; these read VELESSDDELP and YDDD…EEET. The segment covering 543–561 has biased composition (polar residues); that stretch reads STGSAMSSSHTDPSVTQPS. Positions 689–708 are enriched in low complexity; that stretch reads QQEPSSQQQPATQSTPPCQS. The segment covering 742–751 has biased composition (basic and acidic residues); it reads SHEEQPRYED. Over residues 1032–1048 the composition is skewed to polar residues; sequence SQATSEAQEILSDNSEI.

It belongs to the herpesviridae EBNA-6 family. Interacts with host CTPB1; this interaction leads to gene repression, but also seems to interfere with the repressive function of CtBP pre-bound to DNA, leading to EBNA6 mediated up-regulation of many host genes. Interacts with host MYC; this interaction enhances MYC stability. Interacts (via N-terminus) with host RBPJ. Interacts (via N-terminus) with host histone H2AX; this interaction facilitates H2AX proteasomal degradation. Interacts with host TP73; this interaction inhibits TP73-mediated apoptotic pathway. Interacts (via N-terminus) with host PIM1; this interaction upregulates and stabilizes PIM1 and induces cell proliferation by inhibiting the growth suppressive properties of p21.

The protein localises to the host nucleus. Its subcellular location is the host nucleus matrix. Its function is as follows. Plays an essential role for the activation and immortalization of human B-cells. Represses transcription of viral promoters TP1 and Cp through interaction with host RBPJ, and inhibits EBNA2-mediated activation of these promoters. Targets host chromatin through interactions with host transcription factors, especially RBPJ and IRF4. Alternatively, EBNA6 also regulates the transcription of the EBV oncogene LMP1 in a cell cycle-dependent manner. Modulates the activity of several host proteins involved in cell cycle regulation including host cyclin A, MYC, RB, p21 and p27 mainly through binding to the host SCF(SKP2) complex. Inhibits the promoter of host H2AX and targets H2AX to proteasomal degradation in order to promote latency and cell proliferation. Upregulates host PIM1 expression and stabilization. Potentiates PIM1 to promote cell proliferation by inhibiting the growth suppressive properties of p21. The sequence is that of Epstein-Barr nuclear antigen 6 (EBNA6) from Epstein-Barr virus (strain AG876) (HHV-4).